A 190-amino-acid chain; its full sequence is Elongation factor P-like protein (190 aa).

This sequence belongs to the elongation factor P family.

This is Elongation factor P-like protein from Cronobacter sakazakii (strain ATCC BAA-894) (Enterobacter sakazakii).